The following is a 336-amino-acid chain: Glyceraldehyde-3-phosphate dehydrogenase, chromosomal (336 aa).

NAD(+)-binding positions include 12–13 (RI), Asp37, Arg81, and Ser123. Residues 154–156 (SCT) and Thr185 contribute to the D-glyceraldehyde 3-phosphate site. Cys155 functions as the Nucleophile in the catalytic mechanism. Asn186 is an NAD(+) binding site. D-glyceraldehyde 3-phosphate contacts are provided by residues Arg200, 213–214 (TG), and Arg236. Asn317 is an NAD(+) binding site.

The protein belongs to the glyceraldehyde-3-phosphate dehydrogenase family. As to quaternary structure, homotetramer.

The enzyme catalyses D-glyceraldehyde 3-phosphate + phosphate + NAD(+) = (2R)-3-phospho-glyceroyl phosphate + NADH + H(+). The protein operates within carbohydrate biosynthesis; Calvin cycle. Functionally, could be involved in carbon fixation as a component of the Calvin cycle. Catalyzes the oxidative phosphorylation of glyceraldehyde 3-phosphate (G3P) to 1,3-bisphosphoglycerate (BPG) using the cofactor NAD. The first reaction step involves the formation of a hemiacetal intermediate between G3P and a cysteine residue, and this hemiacetal intermediate is then oxidized to a thioester, with concomitant reduction of NAD to NADH. The reduced NADH is then exchanged with the second NAD, and the thioester is attacked by a nucleophilic inorganic phosphate to produce BPG. This chain is Glyceraldehyde-3-phosphate dehydrogenase, chromosomal (cbbGC), found in Cupriavidus necator (strain ATCC 17699 / DSM 428 / KCTC 22496 / NCIMB 10442 / H16 / Stanier 337) (Ralstonia eutropha).